A 447-amino-acid chain; its full sequence is Adenylosuccinate synthetase (447 aa).

GTP-binding positions include 12 to 18 (GDEGKGK) and 40 to 42 (GHT). Residue D13 is the Proton acceptor of the active site. Residues D13 and G40 each contribute to the Mg(2+) site. IMP contacts are provided by residues 13 to 16 (DEGK), 38 to 41 (NAGH), T128, R142, Q223, T238, and R302. H41 functions as the Proton donor in the catalytic mechanism. 298 to 304 (TTTGRKR) contacts substrate. Residues R304, 330–332 (KLD), and 412–414 (SLG) each bind GTP.

Belongs to the adenylosuccinate synthetase family. Homodimer. It depends on Mg(2+) as a cofactor.

The protein localises to the cytoplasm. The enzyme catalyses IMP + L-aspartate + GTP = N(6)-(1,2-dicarboxyethyl)-AMP + GDP + phosphate + 2 H(+). It participates in purine metabolism; AMP biosynthesis via de novo pathway; AMP from IMP: step 1/2. In terms of biological role, plays an important role in the de novo pathway of purine nucleotide biosynthesis. Catalyzes the first committed step in the biosynthesis of AMP from IMP. This chain is Adenylosuccinate synthetase, found in Nostoc sp. (strain PCC 7120 / SAG 25.82 / UTEX 2576).